Reading from the N-terminus, the 849-residue chain is Protein translocase subunit SecA (849 aa).

ATP contacts are provided by residues glutamine 85, 103–107, and aspartate 493; that span reads GEGKT. Zn(2+) contacts are provided by cysteine 832, cysteine 834, cysteine 843, and histidine 844.

The protein belongs to the SecA family. Monomer and homodimer. Part of the essential Sec protein translocation apparatus which comprises SecA, SecYEG and auxiliary proteins SecDF. Other proteins may also be involved. It depends on Zn(2+) as a cofactor.

The protein localises to the cell membrane. It is found in the cytoplasm. The catalysed reaction is ATP + H2O + cellular proteinSide 1 = ADP + phosphate + cellular proteinSide 2.. Part of the Sec protein translocase complex. Interacts with the SecYEG preprotein conducting channel. Has a central role in coupling the hydrolysis of ATP to the transfer of proteins into and across the cell membrane, serving as an ATP-driven molecular motor driving the stepwise translocation of polypeptide chains across the membrane. The polypeptide is Protein translocase subunit SecA (Streptococcus thermophilus (strain ATCC BAA-250 / LMG 18311)).